A 256-amino-acid chain; its full sequence is Thiazole synthase (256 aa).

Lys-96 acts as the Schiff-base intermediate with DXP in catalysis. 1-deoxy-D-xylulose 5-phosphate is bound by residues Gly-157, 183-184 (AG), and 205-206 (NT).

Belongs to the ThiG family. In terms of assembly, homotetramer. Forms heterodimers with either ThiH or ThiS.

It localises to the cytoplasm. It catalyses the reaction [ThiS sulfur-carrier protein]-C-terminal-Gly-aminoethanethioate + 2-iminoacetate + 1-deoxy-D-xylulose 5-phosphate = [ThiS sulfur-carrier protein]-C-terminal Gly-Gly + 2-[(2R,5Z)-2-carboxy-4-methylthiazol-5(2H)-ylidene]ethyl phosphate + 2 H2O + H(+). It participates in cofactor biosynthesis; thiamine diphosphate biosynthesis. Catalyzes the rearrangement of 1-deoxy-D-xylulose 5-phosphate (DXP) to produce the thiazole phosphate moiety of thiamine. Sulfur is provided by the thiocarboxylate moiety of the carrier protein ThiS. In vitro, sulfur can be provided by H(2)S. This Clostridioides difficile (strain 630) (Peptoclostridium difficile) protein is Thiazole synthase.